The chain runs to 146 residues: Large ribosomal subunit protein uL15 (146 aa).

Basic and acidic residues predominate over residues 1-13 (MKLHELHSAEGSR). The interval 1-55 (MKLHELHSAEGSRRNRKRVGRGTSSGYGKTSGRGQKGQLARQGGHTRLGFEGGQM) is disordered. The segment covering 23-35 (TSSGYGKTSGRGQ) has biased composition (gly residues).

This sequence belongs to the universal ribosomal protein uL15 family. As to quaternary structure, part of the 50S ribosomal subunit.

Functionally, binds to the 23S rRNA. This is Large ribosomal subunit protein uL15 from Lactobacillus helveticus (strain DPC 4571).